Here is a 3046-residue protein sequence, read N- to C-terminus: Nucleosome-remodeling factor subunit BPTF (3046 aa).

The tract at residues 1-232 (MRGRRGRPPK…DIPPLEFPKS (232 aa)) is disordered. Pro residues predominate over residues 22 to 33 (PAPPPPPPPPTS). Residues 62-72 (TRLSSPRGGSS) are compositionally biased toward low complexity. Pro residues predominate over residues 78-87 (PPPPPAPPST). A compositionally biased stretch (gly residues) spans 91–110 (GRGGRGGGGGRTGGGGGGGH). Acidic residues predominate over residues 129-186 (HESEEEEEEEDMVSEEEEEEDGDAEETQDSEDDEEDEMEEDDDDSDYPEEMEDDDDDA). Residues 190–203 (TESSFRSHSTYSST) are compositionally biased toward low complexity. Positions 205 to 215 (GRRKPRVHRPR) are enriched in basic residues. S216 bears the Phosphoserine mark. Positions 240–300 (NEHIMNVIAI…LKAVLREEDT (61 aa)) constitute a DDT domain. A PHD-type 1 zinc finger spans residues 390 to 437 (DDHCRVCHKLGDLLCCETCSAVYHLECVKPPLEEVPEDEWQCEVCVAH). 2 stretches are compositionally biased toward basic and acidic residues: residues 567 to 609 (IDNV…SDDK) and 616 to 628 (EQGK…EVGD). Residues 567-774 (IDNVKSPEET…GAGKGASGST (208 aa)) form a disordered region. S572 is subject to Phosphoserine. A coiled-coil region spans residues 574-604 (EETEKDKNETENDSKDAEKNREEFEDQSLEK). Polar residues-rich tracts occupy residues 631 to 653 (NSVS…SPSE) and 690 to 705 (TCES…SIQP). The interval 640–749 (NTTNATSEET…PVSIQEEIVG (110 aa)) is interaction with KEAP1. The segment covering 706–723 (NLENSNSSSELNSSQSES) has biased composition (low complexity). Over residues 725 to 738 (KAADDPENGERESH) the composition is skewed to basic and acidic residues. Phosphoserine occurs at positions 763 and 817. An interaction with MAZ region spans residues 839 to 921 (YFKLGQEGKY…QLENNIPSSF (83 aa)). K880 is modified (N6-acetyllysine). The stretch at 978-1007 (MTSIEREEKEKVKKKEKKQEEEETMQQATW) forms a coiled coil. Residues 1057–1157 (YRKSLEGTKN…MKTESHVNCQ (101 aa)) form a disordered region. Residue T1064 is modified to Phosphothreonine. 2 stretches are compositionally biased toward basic and acidic residues: residues 1087–1102 (IKIE…KGSD) and 1113–1152 (DISK…KTES). Residues K1088, K1138, and K1209 each participate in a glycyl lysine isopeptide (Lys-Gly) (interchain with G-Cter in SUMO2) cross-link. Disordered stretches follow at residues 1215–1339 (KGIG…GNDF), 1371–1448 (IVSS…FRTR), 1465–1537 (GEST…NGKD), and 1605–1706 (NSSE…GESK). 3 stretches are compositionally biased toward polar residues: residues 1220–1232 (TSTN…SESP), 1242–1257 (QSDS…ANND), and 1266–1285 (CSES…TTNK). S1231 is modified (phosphoserine). Residues 1287-1305 (YPKDRVLDDVSIRSPETKC) show a composition bias toward basic and acidic residues. Residue S1300 is modified to Phosphoserine. T1303 is subject to Phosphothreonine. S1310 is modified (phosphoserine). The segment covering 1372–1386 (VSSSKSALHSSVPKS) has biased composition (low complexity). Composition is skewed to polar residues over residues 1409–1426 (SESN…SIQD) and 1434–1444 (VQNSNESISEQ). Residues 1491-1525 (KKLEERPVNKCSDQIKLKNTTDKKNNENRESEKKG) are compositionally biased toward basic and acidic residues. A compositionally biased stretch (polar residues) spans 1629 to 1656 (TLPSTKESDSTQTTTPSASCPESNSVNQ). Residue K1730 forms a Glycyl lysine isopeptide (Lys-Gly) (interchain with G-Cter in SUMO2) linkage. Disordered stretches follow at residues 1973 to 2003 (VPET…TPKQ) and 2041 to 2070 (QAKK…STIS). A coiled-coil region spans residues 2022 to 2050 (EIRAFAERVEKEKAQAVEQQAKKRLEQQK). Low complexity predominate over residues 2054-2070 (IATSTTSPTSSTTSTIS). S2098 is subject to Phosphoserine. R2155 bears the Omega-N-methylarginine mark. Residues 2160–2180 (TIRPNTSGSGGTTSNSQVITG) form a disordered region. An asymmetric dimethylarginine mark is found at R2162, R2184, and R2191. The segment covering 2232-2256 (VSAPNTVSSTPGQKSLTSATSTSNI) has biased composition (polar residues). Disordered regions lie at residues 2232 to 2270 (VSAP…QQGQ), 2346 to 2549 (TAST…RPQL), 2714 to 2733 (QAAK…SKQN), and 2795 to 2858 (PCPP…ISTT). 2 stretches are compositionally biased toward low complexity: residues 2257–2270 (QSSA…QQGQ) and 2346–2362 (TAST…AGTG). The segment covering 2363-2375 (EQRQSKLSPQMQV) has biased composition (polar residues). Residues 2391 to 2431 (PAEAQPQTAQPSAQPQPQTQPQSPAQPEVQTQPEVQTQTTV) show a composition bias toward low complexity. The segment covering 2432–2485 (SSHVPSEAQPTHAQSSKPQVAAQSQPQSNVQGQSPVRVQSPSQTRIRPSTPSQL) has biased composition (polar residues). S2465 bears the Phosphoserine mark. A compositionally biased stretch (low complexity) spans 2486 to 2538 (SPGQQSQVQTTTSQPIPIQPHTSLQIPSQGQPQSQPQVQSSTQTLSSGQTLNQ). Residues 2706–2732 (DKIDKEEKQAAKKRKREESVEQKRSKQ) are a coiled coil. Over residues 2714 to 2729 (QAAKKRKREESVEQKR) the composition is skewed to basic and acidic residues. A compositionally biased stretch (pro residues) spans 2795-2818 (PCPPVTPAPPAPPAPPPSPPPPPA). Basic and acidic residues predominate over residues 2838 to 2847 (KREEEKDSSS). The PHD-type 2 zinc-finger motif lies at 2867-2918 (KLYCICKTPYDESKFYIGCDRCQNWYHGRCVGILQSEAELIDEYVCPQCQST). Positions 2927–3031 (PLTEKDYEGL…SFFVQKLKGF (105 aa)) constitute a Bromo domain.

It belongs to the PBTF family. As to quaternary structure, interacts with MAZ. Interacts with KEAP1. Component of the NURF-1 ISWI chromatin remodeling complex (also called the nucleosome-remodeling factor (NURF) complex) at least composed of SMARCA1 (isoform 2), BPTF, RBBP4 and RBBP7. Within the complex interacts with isoform 2 of SMARCA1. Component of the BPFT-SMARCA1 complex at least composed of SMARCA1 (isoform 1), BPFT, RBBP4 and RBBP7; the complex is catalytically inactive and does not remodel chromatin. Within the complex interacts with isoform 1 of SMARCA1. Component of the NURF-5 ISWI chromatin remodeling complex at least composed of SMARCA5/SNF2H and BPTF. Within NURF-5 ISWI chromatin remodeling complex interacts with SMARCA5/SNF2H. Post-translationally, phosphorylation enhances DNA-binding. In terms of processing, highly susceptible to proteolysis. In terms of tissue distribution, ubiquitously expressed, with highest levels in testis. Present in kidney, liver and brain. In the brain, highest levels are found in motor cortex (at protein level).

The protein resides in the cytoplasm. It localises to the nucleus. Functionally, regulatory subunit of the ATP-dependent NURF-1 and NURF-5 ISWI chromatin remodeling complexes, which form ordered nucleosome arrays on chromatin and facilitate access to DNA during DNA-templated processes such as DNA replication, transcription, and repair. The NURF-1 ISWI chromatin remodeling complex has a lower ATP hydrolysis rate than the NURF-5 ISWI chromatin remodeling complex. Within the NURF-1 ISWI chromatin-remodeling complex, binds to the promoters of En1 and En2 to positively regulate their expression and promote brain development. Histone-binding protein which binds to H3 tails trimethylated on 'Lys-4' (H3K4me3), which mark transcription start sites of active genes. Binds to histone H3 tails dimethylated on 'Lys-4' (H3K4Me2) to a lesser extent. May also regulate transcription through direct binding to DNA or transcription factors. In Homo sapiens (Human), this protein is Nucleosome-remodeling factor subunit BPTF (BPTF).